We begin with the raw amino-acid sequence, 146 residues long: Large ribosomal subunit protein uL15 (146 aa).

The segment covering 1-18 has biased composition (basic and acidic residues); it reads MKLHELKPAEGSRKERNR. Residues 1-54 form a disordered region; it reads MKLHELKPAEGSRKERNRVGRGVATGNGKTSGRGHKGQKARSGGGVRPGFEGGQ. The segment covering 42–52 has biased composition (gly residues); the sequence is SGGGVRPGFEG.

The protein belongs to the universal ribosomal protein uL15 family. As to quaternary structure, part of the 50S ribosomal subunit.

In terms of biological role, binds to the 23S rRNA. In Staphylococcus aureus (strain Mu3 / ATCC 700698), this protein is Large ribosomal subunit protein uL15.